The primary structure comprises 553 residues: Transcription factor 7-like 1 (553 aa).

The span at 1-11 (MPQLNSGGGDE) shows a compositional bias: gly residues. Residues 1-61 (MPQLNSGGGD…SENHSSDSDS (61 aa)) form an interaction with CTNNB1 region. Disordered regions lie at residues 1–77 (MPQL…EKPR), 183–213 (GTPP…PYYP), and 392–474 (SARD…LTTK). 2 stretches are compositionally biased toward basic and acidic residues: residues 17–32 (ELIR…EKSP) and 52–77 (SENH…EKPR). Residues 109-312 (LGGHYLPNGA…SPNLITKPSV (204 aa)) are interaction with AES and TLE4. The HMG box DNA-binding region spans 324–392 (IKKPLNAFML…LHSQLYPTWS (69 aa)). Basic and acidic residues predominate over residues 407–416 (KQSPEMEITK). Residues 408 to 553 (QSPEMEITKT…PLSLVTKSSD (146 aa)) form an interaction with CTBP region. Over residues 444-463 (SPATPSAALASPAAPAATHS) the composition is skewed to low complexity. A compositionally biased stretch (polar residues) spans 464-473 (EQAQPLSLTT).

The protein belongs to the TCF/LEF family. In terms of assembly, interacts with csnk1e, ctnnb1, ctbp, dact1 and gsk3b. May interact with ase and tle4. Post-translationally, phosphorylated. Phosphorylation by csnk1e promotes binding to ctnnb1 while phosphorylation by gsk3b may reverse this effect.

It is found in the nucleus. In terms of biological role, participates in the Wnt signaling pathway. Binds to DNA and acts as a repressor in the absence of ctnnb1, and as an activator in its presence. Required early in development for the establishment of the dorsal body axis in response to maternal Wnt signaling. The sequence is that of Transcription factor 7-like 1 (tcf7l1) from Xenopus tropicalis (Western clawed frog).